We begin with the raw amino-acid sequence, 479 residues long: Glycogen synthase (479 aa).

An ADP-alpha-D-glucose-binding site is contributed by Lys-15.

The protein belongs to the glycosyltransferase 1 family. Bacterial/plant glycogen synthase subfamily.

It catalyses the reaction [(1-&gt;4)-alpha-D-glucosyl](n) + ADP-alpha-D-glucose = [(1-&gt;4)-alpha-D-glucosyl](n+1) + ADP + H(+). The protein operates within glycan biosynthesis; glycogen biosynthesis. Its function is as follows. Synthesizes alpha-1,4-glucan chains using ADP-glucose. The sequence is that of Glycogen synthase from Nostoc punctiforme (strain ATCC 29133 / PCC 73102).